The following is a 293-amino-acid chain: Ribosomal RNA small subunit methyltransferase H (293 aa).

Residues 32-34 (GGH), D51, F78, D99, and Q106 each bind S-adenosyl-L-methionine. The interval 274–293 (DEIRENPASRSAKMRVARRL) is disordered.

The protein belongs to the methyltransferase superfamily. RsmH family.

It localises to the cytoplasm. It carries out the reaction cytidine(1402) in 16S rRNA + S-adenosyl-L-methionine = N(4)-methylcytidine(1402) in 16S rRNA + S-adenosyl-L-homocysteine + H(+). Its function is as follows. Specifically methylates the N4 position of cytidine in position 1402 (C1402) of 16S rRNA. This is Ribosomal RNA small subunit methyltransferase H from Sulfurihydrogenibium azorense (strain DSM 15241 / OCM 825 / Az-Fu1).